Consider the following 267-residue polypeptide: Undecaprenyl-diphosphatase (267 aa).

7 helical membrane-spanning segments follow: residues 1 to 21 (MSLFTLFLLALVQGITEFLPI), 40 to 60 (GQAIDVAVHVGTLGAVILYFW), 85 to 105 (LAFLLIIATIPVIIFGLFLEV), 112 to 132 (LRSIAVIGWTMLIFGLVLYWA), 189 to 209 (AMLMSIPTIIATGVFAGAEVI), 219 to 239 (DGAIAAALSFLAALAALTLMF), and 245 to 265 (VSFTPYVIYRVILGVILLVIA).

This sequence belongs to the UppP family.

It localises to the cell inner membrane. It catalyses the reaction di-trans,octa-cis-undecaprenyl diphosphate + H2O = di-trans,octa-cis-undecaprenyl phosphate + phosphate + H(+). Its function is as follows. Catalyzes the dephosphorylation of undecaprenyl diphosphate (UPP). Confers resistance to bacitracin. In Jannaschia sp. (strain CCS1), this protein is Undecaprenyl-diphosphatase.